The following is an 80-amino-acid chain: uncharacterized protein (80 aa).

Belongs to the BolA/IbaG family.

This is an uncharacterized protein from Buchnera aphidicola subsp. Acyrthosiphon pisum (strain APS) (Acyrthosiphon pisum symbiotic bacterium).